We begin with the raw amino-acid sequence, 162 residues long: Small ribosomal subunit protein uS5 (162 aa).

Residues Leu-11–Val-74 form the S5 DRBM domain.

It belongs to the universal ribosomal protein uS5 family. In terms of assembly, part of the 30S ribosomal subunit. Contacts proteins S4 and S8.

Its function is as follows. With S4 and S12 plays an important role in translational accuracy. Located at the back of the 30S subunit body where it stabilizes the conformation of the head with respect to the body. The chain is Small ribosomal subunit protein uS5 from Pelobacter propionicus (strain DSM 2379 / NBRC 103807 / OttBd1).